Here is a 590-residue protein sequence, read N- to C-terminus: Leucine-rich repeat transmembrane neuronal protein 4 (590 aa).

A signal peptide spans 1 to 30 (MGFRLITQLKGMSVFLVLFPTLLLVMLTGA). Positions 31–61 (QRACPKNCRCDGKIVYCESHAFADIPENISG) constitute an LRRNT domain. Residues 31–424 (QRACPKNCRC…HEYEHVSFHK (394 aa)) are Extracellular-facing. Asn58 is a glycosylation site (N-linked (GlcNAc...) asparagine). LRR repeat units lie at residues 62 to 83 (GSQGLSLRFNSIQKLKSNQFAG), 86 to 107 (QLIWLYLDHNYISSVDEDAFQG), 110 to 131 (RLKELILSSNKITYLHNKTFHP), 134 to 155 (NLRNLDLSYNKLQTLQSEQFKG), 158 to 179 (KLIILHLRSNSLKTVPIRVFQD), 182 to 203 (NLDFLDLGYNRLRSLSRNAFAG), 206 to 226 (KLKELHLEHNQFSKINFAHFP), 230 to 251 (NLRSIYLQWNRIRSVSQGLTWT), 254 to 275 (SLHTLDLSGNDIQAIEPGTFKC), and 278 to 299 (NLQKLNLDSNKLTNVSQETVNA). An N-linked (GlcNAc...) asparagine glycan is attached at Asn126. A glycan (N-linked (GlcNAc...) asparagine) is linked at Asn291. The 52-residue stretch at 311-362 (NMWECSRSICPLFYWLKNFKGNKESTMICAGPKHIQGEKVSDAVETYNICSD) folds into the LRRCT domain. Residues 425 to 445 (IIAGSVALFLSVAMILLVIYV) traverse the membrane as a helical segment. Residues 446 to 590 (SWKRYPASMK…PAIYLERITN (145 aa)) lie on the Cytoplasmic side of the membrane.

This sequence belongs to the LRRTM family. In terms of assembly, peripherally associated with AMPAR complex. AMPAR complex consists of an inner core made of 4 pore-forming GluA/GRIA proteins (GRIA1, GRIA2, GRIA3 and GRIA4) and 4 major auxiliary subunits arranged in a twofold symmetry. One of the two pairs of distinct binding sites is occupied either by CNIH2, CNIH3 or CACNG2, CACNG3. The other harbors CACNG2, CACNG3, CACNG4, CACNG8 or GSG1L. This inner core of AMPAR complex is complemented by outer core constituents binding directly to the GluA/GRIA proteins at sites distinct from the interaction sites of the inner core constituents. Outer core constituents include at least PRRT1, PRRT2, CKAMP44/SHISA9, FRRS1L and NRN1. The proteins of the inner and outer core serve as a platform for other, more peripherally associated AMPAR constituents, including LRRTM4. Alone or in combination, these auxiliary subunits control the gating and pharmacology of the AMPAR complex and profoundly impact their biogenesis and protein processing. As to expression, predominantly in the brain (at protein level). Also expressed in the cerebellum and other tissues.

It localises to the cell membrane. The protein localises to the postsynaptic cell membrane. Its function is as follows. May play a role in the development and maintenance of the vertebrate nervous system. Exhibits strong synaptogenic activity, restricted to excitatory presynaptic differentiation. This Mus musculus (Mouse) protein is Leucine-rich repeat transmembrane neuronal protein 4 (Lrrtm4).